An 861-amino-acid polypeptide reads, in one-letter code: DNA mismatch repair protein MutS (861 aa).

An ATP-binding site is contributed by 609-616 (GPNMAGKS).

This sequence belongs to the DNA mismatch repair MutS family.

This protein is involved in the repair of mismatches in DNA. It is possible that it carries out the mismatch recognition step. This protein has a weak ATPase activity. The chain is DNA mismatch repair protein MutS from Borrelia hermsii (strain HS1 / DAH).